The chain runs to 104 residues: Small ribosomal subunit protein bS18c (104 aa).

The interval aspartate 84–lysine 104 is disordered.

This sequence belongs to the bacterial ribosomal protein bS18 family. As to quaternary structure, part of the 30S ribosomal subunit.

Its subcellular location is the plastid. It localises to the chloroplast. This Cucumis sativus (Cucumber) protein is Small ribosomal subunit protein bS18c.